The primary structure comprises 109 residues: Large ribosomal subunit protein uL22 (109 aa).

Belongs to the universal ribosomal protein uL22 family. Part of the 50S ribosomal subunit.

This protein binds specifically to 23S rRNA; its binding is stimulated by other ribosomal proteins, e.g. L4, L17, and L20. It is important during the early stages of 50S assembly. It makes multiple contacts with different domains of the 23S rRNA in the assembled 50S subunit and ribosome. Its function is as follows. The globular domain of the protein is located near the polypeptide exit tunnel on the outside of the subunit, while an extended beta-hairpin is found that lines the wall of the exit tunnel in the center of the 70S ribosome. This is Large ribosomal subunit protein uL22 from Polaromonas naphthalenivorans (strain CJ2).